A 323-amino-acid polypeptide reads, in one-letter code: Mortality factor 4-like protein 1 (323 aa).

The 51-residue stretch at 12-62 (QEGERVLCFHGPLLYEAKCVKVAIKDKQVKYFIHHSGWNKNWDEWVPESRV) folds into the Tudor-knot domain. Residues 76–143 (LQKANQEQYA…RKKRARVDPT (68 aa)) are disordered. Residues 94–227 (PGKKTSGLQQ…VAGIKEYFNV (134 aa)) are sufficient for interaction with SIN3A. Positions 96 to 107 (KKTSGLQQKNVD) match the Nuclear localization signal motif. An N6-acetyllysine modification is found at Lys-104. The tract at residues 125-191 (STSETPQPPR…FYLPAKKNVD (67 aa)) is interaction with RB1-1. The sufficient for interaction with PHF12 stretch occupies residues 149-303 (TFMNRVEVKV…FLKYLAKNSA (155 aa)). The 172-residue stretch at 152–323 (NRVEVKVKIP…APPEYHRKAV (172 aa)) folds into the MRG domain. An interaction with RB1-2 region spans residues 284-305 (LALLLNYLHDFLKYLAKNSATL).

As to quaternary structure, component of the NuA4 histone acetyltransferase complex which contains the catalytic subunit KAT5/TIP60 and the subunits EP400, TRRAP/PAF400, BRD8/SMAP, EPC1, DMAP1/DNMAP1, RUVBL1/TIP49, RUVBL2, ING3, actin, ACTL6A/BAF53A, MORF4L1/MRG15, MORF4L2/MRGX, MRGBP, YEATS4/GAS41, VPS72/YL1 and MEAF6. The NuA4 complex interacts with MYC and the adenovirus E1A protein. MORF4L1 may also participate in the formation of NuA4 related complexes which lack the KAT5/TIP60 catalytic subunit, but which include the SWI/SNF related protein SRCAP. Component of the mSin3A histone deacetylase complex, which includes SIN3A, HDAC2, ARID4B, MORF4L1, RBBP4/RbAp48, and RBBP7/RbAp46. May also interact with PHF12 and one or more as yet undefined members of the TLE (transducin-like enhancer of split) family of transcriptional repressors. Component of the SIN3B complex, which includes SIN3B, HDAC2 or HDAC1, PHF12 and MORF4L1. Interacts with RB1 and KAT8. Interacts with the N-terminus of MRFAP1. Found in a complex composed of MORF4L1, MRFAP1 and RB1. Interacts with the entire BRCA complex, which contains BRCA1, PALB2, BRCA2 and RAD51. Interacts with PALB2. Forms a complex with MSL1 and NUPR1.

It localises to the nucleus. In terms of biological role, component of the NuA4 histone acetyltransferase (HAT) complex which is involved in transcriptional activation of select genes principally by acetylation of nucleosomal histones H4 and H2A. This modification may both alter nucleosome - DNA interactions and promote interaction of the modified histones with other proteins which positively regulate transcription. This complex may be required for the activation of transcriptional programs associated with oncogene and proto-oncogene mediated growth induction, tumor suppressor mediated growth arrest and replicative senescence, apoptosis, and DNA repair. The NuA4 complex ATPase and helicase activities seem to be, at least in part, contributed by the association of RUVBL1 and RUVBL2 with EP400. NuA4 may also play a direct role in DNA repair when directly recruited to sites of DNA damage. As part of the SIN3B complex represses transcription and counteracts the histone acetyltransferase activity of EP300 through the recognition H3K27ac marks by PHF12 and the activity of the histone deacetylase HDAC2. SIN3B complex is recruited downstream of the constitutively active genes transcriptional start sites through interaction with histones and mitigates histone acetylation and RNA polymerase II progression within transcribed regions contributing to the regulation of transcription. Required for homologous recombination repair (HRR) and resistance to mitomycin C (MMC). Involved in the localization of PALB2, BRCA2 and RAD51, but not BRCA1, to DNA-damage foci. The chain is Mortality factor 4-like protein 1 (MORF4L1) from Pongo abelii (Sumatran orangutan).